Reading from the N-terminus, the 428-residue chain is Probable G-protein coupled receptor (428 aa).

Residues 1-46 lie on the Extracellular side of the membrane; the sequence is MMADKTSPMITSDHSISNFSTGLFGPHPTVPPDVGVVTSSQSQMKD. N-linked (GlcNAc...) asparagine glycosylation is present at asparagine 18. Residues 47–67 form a helical membrane-spanning segment; the sequence is LFGLFCMVTLNLIALLANTGV. Over 68–93 the chain is Cytoplasmic; it reads MVAIARAPHLKKFAFVCHLCAVDVLC. Residues 94 to 114 form a helical membrane-spanning segment; that stretch reads AILLMPLGIISSSPFFGTVVF. Over 115 to 120 the chain is Extracellular; the sequence is TILECQ. Residues 121-141 form a helical membrane-spanning segment; that stretch reads VYIFLNVFLIWLSILTITAIS. The Cytoplasmic portion of the chain corresponds to 142-162; that stretch reads VERYFYIVHPMRYEVKMTINL. Residues 163–183 form a helical membrane-spanning segment; that stretch reads VIGVMLLIWFKSLLLALVTLF. The Extracellular portion of the chain corresponds to 184-210; that stretch reads GWPPYGHQSSIAASHCSLHASHSRLRG. A helical membrane pass occupies residues 211-231; that stretch reads VFAVLFCVICFLAPVVVIFSV. The Cytoplasmic portion of the chain corresponds to 232–293; it reads YSAVYKVARS…PERAFSGGKA (62 aa). A helical membrane pass occupies residues 294-314; sequence ALTLAFIVGQFLVCWLPFFIF. Over 315–428 the chain is Extracellular; the sequence is HLQMSLTGSM…IPGQIPEEQA (114 aa). Residues 398–414 show a composition bias toward polar residues; that stretch reads SETHPSFANSNPRNMEN. The segment at 398 to 428 is disordered; it reads SETHPSFANSNPRNMENQAHKIPGQIPEEQA.

Belongs to the G-protein coupled receptor 1 family.

The protein resides in the cell membrane. This chain is Probable G-protein coupled receptor, found in Oryzias latipes (Japanese rice fish).